The sequence spans 732 residues: Catalase-peroxidase (732 aa).

Residues 1–15 (MSTESKCPFAGGAYA) form the signal peptide. The tryptophyl-tyrosyl-methioninium (Trp-Tyr) (with M-245) cross-link spans 96-219 (WHSAGTYRIY…LGAVQMGLIY (124 aa)). His-97 functions as the Proton acceptor in the catalytic mechanism. Positions 219 to 245 (YVNPEGPNGNPDPLASARDIRETFARM) form a cross-link, tryptophyl-tyrosyl-methioninium (Tyr-Met) (with W-96). Residue His-260 participates in heme b binding.

Belongs to the peroxidase family. Peroxidase/catalase subfamily. As to quaternary structure, homodimer or homotetramer. Requires heme b as cofactor. Post-translationally, formation of the three residue Trp-Tyr-Met cross-link is important for the catalase, but not the peroxidase activity of the enzyme.

It carries out the reaction H2O2 + AH2 = A + 2 H2O. The catalysed reaction is 2 H2O2 = O2 + 2 H2O. In terms of biological role, bifunctional enzyme with both catalase and broad-spectrum peroxidase activity. This chain is Catalase-peroxidase, found in Acidobacterium capsulatum (strain ATCC 51196 / DSM 11244 / BCRC 80197 / JCM 7670 / NBRC 15755 / NCIMB 13165 / 161).